The chain runs to 343 residues: S-adenosylmethionine:tRNA ribosyltransferase-isomerase (343 aa).

It belongs to the QueA family. In terms of assembly, monomer.

Its subcellular location is the cytoplasm. The catalysed reaction is 7-aminomethyl-7-carbaguanosine(34) in tRNA + S-adenosyl-L-methionine = epoxyqueuosine(34) in tRNA + adenine + L-methionine + 2 H(+). Its pathway is tRNA modification; tRNA-queuosine biosynthesis. In terms of biological role, transfers and isomerizes the ribose moiety from AdoMet to the 7-aminomethyl group of 7-deazaguanine (preQ1-tRNA) to give epoxyqueuosine (oQ-tRNA). The sequence is that of S-adenosylmethionine:tRNA ribosyltransferase-isomerase from Geotalea uraniireducens (strain Rf4) (Geobacter uraniireducens).